Reading from the N-terminus, the 521-residue chain is Acidic amino acid decarboxylase GADL1 (521 aa).

A compositionally biased stretch (basic and acidic residues) spans 1 to 12 (MSLLPDRERAPD). The segment at 1–20 (MSLLPDRERAPDGDISPQEM) is disordered. K333 carries the N6-(pyridoxal phosphate)lysine modification.

Belongs to the group II decarboxylase family. In terms of assembly, homodimer. Pyridoxal 5'-phosphate serves as cofactor. As to expression, expressed at highest levels in skeletal muscles. Also detected heart, spleen and rumen.

The enzyme catalyses L-aspartate + H(+) = beta-alanine + CO2. It carries out the reaction 3-sulfino-L-alanine + H(+) = hypotaurine + CO2. The catalysed reaction is L-cysteate + H(+) = taurine + CO2. In terms of biological role, catalyzes the decarboxylation of L-aspartate, 3-sulfino-L-alanine (cysteine sulfinic acid), and L-cysteate to beta-alanine, hypotaurine and taurine, respectively. The preferred substrate is L-aspartate. Does not exhibit any decarboxylation activity toward glutamate. The polypeptide is Acidic amino acid decarboxylase GADL1 (GADL1) (Bos taurus (Bovine)).